Here is a 206-residue protein sequence, read N- to C-terminus: RNA-free ribonuclease P (206 aa).

Residues 187–206 (NLAGDDPGHAPPCGPDQPAG) are disordered. Residues 195–206 (HAPPCGPDQPAG) are compositionally biased toward pro residues.

It belongs to the HARP family.

The catalysed reaction is Endonucleolytic cleavage of RNA, removing 5'-extranucleotides from tRNA precursor.. Functionally, RNA-free RNase P that catalyzes the removal of the 5'-leader sequence from pre-tRNA to produce the mature 5'-terminus. This chain is RNA-free ribonuclease P, found in Halorhodospira halophila (strain DSM 244 / SL1) (Ectothiorhodospira halophila (strain DSM 244 / SL1)).